A 128-amino-acid chain; its full sequence is Aspartate 1-decarboxylase (128 aa).

The Schiff-base intermediate with substrate; via pyruvic acid role is filled by serine 25. Serine 25 is modified (pyruvic acid (Ser)). Threonine 57 lines the substrate pocket. Tyrosine 58 functions as the Proton donor in the catalytic mechanism. 73 to 75 contributes to the substrate binding site; that stretch reads GAA.

This sequence belongs to the PanD family. As to quaternary structure, heterooctamer of four alpha and four beta subunits. Pyruvate is required as a cofactor. In terms of processing, is synthesized initially as an inactive proenzyme, which is activated by self-cleavage at a specific serine bond to produce a beta-subunit with a hydroxyl group at its C-terminus and an alpha-subunit with a pyruvoyl group at its N-terminus.

It localises to the cytoplasm. The enzyme catalyses L-aspartate + H(+) = beta-alanine + CO2. It participates in cofactor biosynthesis; (R)-pantothenate biosynthesis; beta-alanine from L-aspartate: step 1/1. Catalyzes the pyruvoyl-dependent decarboxylation of aspartate to produce beta-alanine. This chain is Aspartate 1-decarboxylase, found in Caldicellulosiruptor bescii (strain ATCC BAA-1888 / DSM 6725 / KCTC 15123 / Z-1320) (Anaerocellum thermophilum).